Reading from the N-terminus, the 172-residue chain is Acidic proline-rich protein PRP25 (172 aa).

Positions 1 to 16 (MLVVLFTAVLLTLSYA) are cleaved as a signal peptide. A disordered region spans residues 22-172 (ELQILDQTPN…QQGPPPPGGP (151 aa)). The span at 32–44 (QKPPPPGFPPRPP) shows a compositional bias: pro residues. A compositionally biased stretch (low complexity) spans 57–67 (GPQQSPLQPGK). Pro residues-rich tracts occupy residues 68-137 (PQDP…PQQK) and 145-172 (QGPP…PGGP).

The protein localises to the secreted. The protein is Acidic proline-rich protein PRP25 of Rattus norvegicus (Rat).